Consider the following 130-residue polypeptide: MAAIYLDSSAIVKLAVREPESDALRRYLRTRHPRVSSALARAEVMRALLDKGESARKAGRRALAHLDLLRVDKRVLDLAGGLLPFELRTLDAIHLATAQRLGVDLGRLCTYDDRMRDAAKTLGMAVIAPS.

The region spanning 4–118 (IYLDSSAIVK…CTYDDRMRDA (115 aa)) is the PINc domain. Positions 7 and 91 each coordinate Mg(2+).

It belongs to the PINc/VapC protein family. Mg(2+) serves as cofactor.

Toxic component of a type II toxin-antitoxin (TA) system. An RNase. Upon expression in M.smegmatis inhibits colony formation. Its toxic effect is neutralized by coexpression with cognate antitoxin VapB46. This chain is Ribonuclease VapC46, found in Mycobacterium tuberculosis (strain ATCC 25618 / H37Rv).